We begin with the raw amino-acid sequence, 482 residues long: Protein translocase subunit SecY (482 aa).

The disordered stretch occupies residues 1 to 22 (MVIKKPANKVDKKSTFKSSNKK). 10 consecutive transmembrane segments (helical) span residues 41–61 (ILFTLLALIIIRLGVYITVPG), 92–112 (FSILALGVSPYITASIIVQLL), 137–157 (LTKIIMIPFALMQAEATIFTL), 177–197 (AFYYILIPLVMLGGSFFMLWI), 201–221 (ITIKGIGNGISIVIFIGIIIS), 243–263 (IFFSGLLNFMIYISVFLLVIL), 303–323 (VIPVIFASAIISTPITISQII), 342–362 (FNTWWGISIFGILIVLFTFLY), 405–425 (VVGSVFLAIIALLPYVISKLT), and 426–446 (QLPSNLAIGGTGLIICISVAI).

It belongs to the SecY/SEC61-alpha family. Component of the Sec protein translocase complex. Heterotrimer consisting of SecY, SecE and SecG subunits. The heterotrimers can form oligomers, although 1 heterotrimer is thought to be able to translocate proteins. Interacts with the ribosome. Interacts with SecDF, and other proteins may be involved. Interacts with SecA.

It localises to the cell membrane. Its function is as follows. The central subunit of the protein translocation channel SecYEG. Consists of two halves formed by TMs 1-5 and 6-10. These two domains form a lateral gate at the front which open onto the bilayer between TMs 2 and 7, and are clamped together by SecE at the back. The channel is closed by both a pore ring composed of hydrophobic SecY resides and a short helix (helix 2A) on the extracellular side of the membrane which forms a plug. The plug probably moves laterally to allow the channel to open. The ring and the pore may move independently. This Mycoplasma capricolum subsp. capricolum (strain California kid / ATCC 27343 / NCTC 10154) protein is Protein translocase subunit SecY.